The chain runs to 81 residues: ATP synthase subunit c (81 aa).

2 helical membrane-spanning segments follow: residues 5-25 (IAAG…IGAG) and 57-77 (VGLV…FVFA).

This sequence belongs to the ATPase C chain family. F-type ATPases have 2 components, F(1) - the catalytic core - and F(0) - the membrane proton channel. F(1) has five subunits: alpha(3), beta(3), gamma(1), delta(1), epsilon(1). F(0) has three main subunits: a(1), b(2) and c(10-14). The alpha and beta chains form an alternating ring which encloses part of the gamma chain. F(1) is attached to F(0) by a central stalk formed by the gamma and epsilon chains, while a peripheral stalk is formed by the delta and b chains.

The protein resides in the cell membrane. F(1)F(0) ATP synthase produces ATP from ADP in the presence of a proton or sodium gradient. F-type ATPases consist of two structural domains, F(1) containing the extramembraneous catalytic core and F(0) containing the membrane proton channel, linked together by a central stalk and a peripheral stalk. During catalysis, ATP synthesis in the catalytic domain of F(1) is coupled via a rotary mechanism of the central stalk subunits to proton translocation. In terms of biological role, key component of the F(0) channel; it plays a direct role in translocation across the membrane. A homomeric c-ring of between 10-14 subunits forms the central stalk rotor element with the F(1) delta and epsilon subunits. This Mycolicibacterium gilvum (strain PYR-GCK) (Mycobacterium gilvum (strain PYR-GCK)) protein is ATP synthase subunit c.